The primary structure comprises 338 residues: Ketoreductase azaE (338 aa).

2 residues coordinate NADP(+): Lys-41 and Tyr-166.

This sequence belongs to the NAD(P)-dependent epimerase/dehydratase family. Dihydroflavonol-4-reductase subfamily.

It functions in the pathway secondary metabolite biosynthesis. Ketoreductase; part of the gene cluster that mediates the biosynthesis of azaphilones, a class of fungal metabolites characterized by a highly oxygenated pyrano-quinone bicyclic core and exhibiting a broad range of bioactivities. In the first step, the non-reducing polyketide synthase azaA forms the hexaketide precursor from successive condensations of five malonyl-CoA units, presumably with a simple acetyl-CoA starter unit. The reactive polyketide chain then undergoes a PT-mediated C2-C7 cyclization to afford the aromatic ring and is eventually released as an aldehyde through the R-domain. The putative ketoreductase azaE is proposed to catalyze the reduction of the terminal ketone resulting in the early culture product FK17-P2a. The monooxygenase azaH was demonstrated to be the only enzyme required to convert FK17-P2a to azanigerone E. AzaH first hydroxylates the benzaldehyde intermediate FK17-P2a at C4, which triggers the formation of the pyran-ring to afford azanigerone E. In parallel, the 2,4-dimethylhexanoyl chain is synthesized by the HR-PKS azaB and is proposed to be transferred to the C4-hydroxyl of azanigerone E by the acyltransferase azaD directly from the ACP domain of azaB. Alternatively, the 2,4-dimethyl-hexanoyl chain may be offloaded from the HR-PKS as a carboxylic acid and converted to an acyl-CoA by azaF. The resulting acyl-CoA molecule could then be taken up as a substrate by AzaD to form azanigerone B. To yield the carboxylic acid substituent in azanigerone A, the hydroxypropyl side chain of azanigerone B would need to undergo a C-C oxidative cleavage catalyzed by cytochrome P450 AzaI. AzaI is proposed to act on a vicinal diol that leads to a C-C bond scission either through an alkoxyradical intermediate or a peroxy complex. In the biosynthesis of azanigerone A, azanigerone B first undergoes hydroxylation at C10, possibly catalyzed by one of the two FAD-dependent monooxygenases encoded in the cluster, azaG or azaL, resulting in the vicinal diol azanigerone C. Oxidative cleavage of azanigerone C by azaI would yield the corresponding aldehyde derivative of azanigerone A. Finally, the dehydrogenase azaJ is proposed to convert the aldehyde functional group into the carboxylic acid, completing the conversion from azanigerone B to azanigerone A. Alternatively, the oxidation of aldehyde to carboxylic acid may be catalyzed by the same P450 enzyme azaI via consecutive oxidation or by endogenous alcohol dehydrogenase. This Aspergillus niger (strain ATCC 1015 / CBS 113.46 / FGSC A1144 / LSHB Ac4 / NCTC 3858a / NRRL 328 / USDA 3528.7) protein is Ketoreductase azaE.